The primary structure comprises 184 residues: Protein GrpE (184 aa).

Residues 1–10 show a composition bias toward basic and acidic residues; it reads MSQETEKDLE. Residues 1–38 are disordered; the sequence is MSQETEKDLEQTQNEELVEEAQSDEKKDQEVDPVEAAQ.

Belongs to the GrpE family. Homodimer.

The protein resides in the cytoplasm. Functionally, participates actively in the response to hyperosmotic and heat shock by preventing the aggregation of stress-denatured proteins, in association with DnaK and GrpE. It is the nucleotide exchange factor for DnaK and may function as a thermosensor. Unfolded proteins bind initially to DnaJ; upon interaction with the DnaJ-bound protein, DnaK hydrolyzes its bound ATP, resulting in the formation of a stable complex. GrpE releases ADP from DnaK; ATP binding to DnaK triggers the release of the substrate protein, thus completing the reaction cycle. Several rounds of ATP-dependent interactions between DnaJ, DnaK and GrpE are required for fully efficient folding. This chain is Protein GrpE, found in Sulfurovum sp. (strain NBC37-1).